Reading from the N-terminus, the 224-residue chain is Menaquinol:cytochrome c reductase cytochrome b subunit (224 aa).

Residues 37 to 57 (FSAFVYCFGGLTFFVTVIQVL) traverse the membrane as a helical segment. Residue Tyr-42 participates in heme b binding. Residue Cys-43 participates in heme c binding. Heme b contacts are provided by Arg-91, His-94, His-108, and Arg-111. 3 helical membrane-spanning segments follow: residues 96–116 (WGAS…FFQG), 126–146 (WIVG…GYLL), and 195–215 (IHVF…FIMI). Heme b is bound by residues His-196 and His-211. Residues Arg-216 and Ile-220 each contribute to the heme c site. Heme b is bound at residue Ser-221.

Belongs to the cytochrome b family. As to quaternary structure, the main subunits of the menaquinol:cytochrome c complex are a Rieske-type iron-sulfur protein (QcrA), a cytochrome b (QcrB) and a cytochrome c (QcrC). Heme b is required as a cofactor. Heme c serves as cofactor.

The protein resides in the cell membrane. In terms of biological role, component of the menaquinol:cytochrome c reductase complex. In Bacillus subtilis (strain 168), this protein is Menaquinol:cytochrome c reductase cytochrome b subunit.